The following is a 256-amino-acid chain: Neuroendocrine secretory protein 55 (256 aa).

Residues 1–46 form the signal peptide; that stretch reads MDRRSRAHQWRRARHNYNDLCPPIGRRAATALLWLSCSIALLRALA. The interval 61–256 is disordered; it reads SFLNAHHRSA…RKGPIPIRRH (196 aa). Residues 86-103 show a composition bias toward basic and acidic residues; it reads ESDHEHEEAEPELARPEC. Acidic residues-rich tracts occupy residues 104–139 and 206–216; these read LEYD…ETEP and LDEDPRDPEES. The span at 225 to 236 shows a compositional bias: basic residues; sequence QPRRCKTRRPAR.

Belongs to the NESP55 family. In terms of processing, binds keratan sulfate chains. Post-translationally, may be proteolytically processed to give rise to a number of active peptides.

The protein resides in the cytoplasmic vesicle. It localises to the secretory vesicle. It is found in the synaptic vesicle. Its subcellular location is the secreted. The sequence is that of Neuroendocrine secretory protein 55 from Rattus norvegicus (Rat).